Here is a 401-residue protein sequence, read N- to C-terminus: O-methyltransferase SAT18 (401 aa).

Asp249 serves as a coordination point for S-adenosyl-L-methionine. His300 acts as the Proton acceptor in catalysis.

This sequence belongs to the class I-like SAM-binding methyltransferase superfamily. Cation-independent O-methyltransferase family.

Its pathway is mycotoxin biosynthesis. In terms of biological role, O-methyltransferase; part of the satratoxin SC3 cluster involved in the biosynthesis of satratoxins, trichothecene mycotoxins that are associated with human food poisonings. Satratoxins are suggested to be made by products of multiple gene clusters (SC1, SC2 and SC3) that encode 21 proteins in all, including polyketide synthases, acetyltransferases, and other enzymes expected to modify the trichothecene skeleton. SC1 encodes 10 proteins, SAT1 to SAT10. The largest are SAT8, which encodes a putative polyketide synthase (PKS) with a conventional non-reducing architecture, and SAT10, a putative protein containing four ankyrin repeats and thus may be involved in protein scaffolding. The putative short-chain reductase SAT3 may assist the PKS in some capacity. SAT6 contains a secretory lipase domain and acts probably as a trichothecene esterase. SAT5 encodes a putative acetyltransferase, and so, with SAT6, may affect endogenous protection from toxicity. The probable transcription factor SAT9 may regulate the expression of the SC1 cluster. SC2 encodes proteins SAT11 to SAT16, the largest of which encodes the putative reducing PKS SAT13. SAT11 is a cytochrome P450 monooxygenase, while SAT14 and SAT16 are probable acetyltransferases. The SC2 cluster may be regulated by the transcription factor SAT15. SC3 is a small cluster that encodes 5 proteins, SAT17 to SAT21. SAT21 is a putative MFS-type transporter which may have a role in exporting secondary metabolites. The four other proteins putatively encoded in SC3 include the taurine hydroxylase-like protein SAT17, the O-methyltransferase SAT18, the acetyltransferase SAT19, and the Cys6-type zinc finger SAT20, the latter being probably involved in regulation of SC3 expression. This Stachybotrys chartarum (strain CBS 109288 / IBT 7711) (Toxic black mold) protein is O-methyltransferase SAT18.